The chain runs to 372 residues: Transcription factor MYB80 (372 aa).

HTH myb-type domains are found at residues 9–65 (KDNV…RPDL) and 66–116 (KHGE…KKKL). 2 consecutive DNA-binding regions (H-T-H motif) follow at residues 37 to 61 (WRLI…TNYL) and 89 to 112 (WSVI…NTKL). Residues 298–311 (MWSHQSLYSGSSGT) show a composition bias toward polar residues. Residues 298 to 347 (MWSHQSLYSGSSGTEEARRELPEKGNDSVGSSGGDDDAADDGKDSGKGAA) form a disordered region. A compositionally biased stretch (basic and acidic residues) spans 312–323 (EEARRELPEKGN).

It is found in the nucleus. Its function is as follows. Essential for tapetum development in anthers and microsporogenesis. May regulate the timing of tapetal programmed cell death (PCD) which is critical for pollen development. This is Transcription factor MYB80 from Oryza sativa subsp. japonica (Rice).